A 37-amino-acid chain; its full sequence is Large ribosomal subunit protein bL36 (37 aa).

This sequence belongs to the bacterial ribosomal protein bL36 family.

This is Large ribosomal subunit protein bL36 from Nitratidesulfovibrio vulgaris (strain ATCC 29579 / DSM 644 / CCUG 34227 / NCIMB 8303 / VKM B-1760 / Hildenborough) (Desulfovibrio vulgaris).